A 314-amino-acid chain; its full sequence is Homoserine kinase (314 aa).

An ATP-binding site is contributed by Pro-96–Cys-106.

This sequence belongs to the GHMP kinase family. Homoserine kinase subfamily.

The protein localises to the cytoplasm. It catalyses the reaction L-homoserine + ATP = O-phospho-L-homoserine + ADP + H(+). Its pathway is amino-acid biosynthesis; L-threonine biosynthesis; L-threonine from L-aspartate: step 4/5. In terms of biological role, catalyzes the ATP-dependent phosphorylation of L-homoserine to L-homoserine phosphate. The protein is Homoserine kinase of Haemophilus influenzae (strain PittEE).